A 366-amino-acid polypeptide reads, in one-letter code: Carbamoyl phosphate synthase small chain (366 aa).

Residues 1–168 (MYGILVLEDG…KETVVYSADD (168 aa)) are CPSase. Positions 45, 220, and 222 each coordinate L-glutamine. Residues 172–363 (KCVLIDCGVK…VELGIKFKAE (192 aa)) enclose the Glutamine amidotransferase type-1 domain. Cysteine 247 (nucleophile) is an active-site residue. Positions 248, 251, 289, 291, and 292 each coordinate L-glutamine. Catalysis depends on residues histidine 336 and glutamate 338.

The protein belongs to the CarA family. As to quaternary structure, composed of two chains; the small (or glutamine) chain promotes the hydrolysis of glutamine to ammonia, which is used by the large (or ammonia) chain to synthesize carbamoyl phosphate. Tetramer of heterodimers (alpha,beta)4.

The catalysed reaction is hydrogencarbonate + L-glutamine + 2 ATP + H2O = carbamoyl phosphate + L-glutamate + 2 ADP + phosphate + 2 H(+). The enzyme catalyses L-glutamine + H2O = L-glutamate + NH4(+). Its pathway is amino-acid biosynthesis; L-arginine biosynthesis; carbamoyl phosphate from bicarbonate: step 1/1. It functions in the pathway pyrimidine metabolism; UMP biosynthesis via de novo pathway; (S)-dihydroorotate from bicarbonate: step 1/3. Small subunit of the glutamine-dependent carbamoyl phosphate synthetase (CPSase). CPSase catalyzes the formation of carbamoyl phosphate from the ammonia moiety of glutamine, carbonate, and phosphate donated by ATP, constituting the first step of 2 biosynthetic pathways, one leading to arginine and/or urea and the other to pyrimidine nucleotides. The small subunit (glutamine amidotransferase) binds and cleaves glutamine to supply the large subunit with the substrate ammonia. In Methanococcus maripaludis (strain C6 / ATCC BAA-1332), this protein is Carbamoyl phosphate synthase small chain.